The primary structure comprises 191 residues: tRNA-specific adenosine deaminase 2 (191 aa).

In terms of domain architecture, CMP/dCMP-type deaminase spans 20 to 145; that stretch reads EETEKWMEQA…SVLDIASADL (126 aa). A Zn(2+)-binding site is contributed by histidine 71. Glutamate 73 serves as the catalytic Proton donor. Zn(2+) is bound by residues cysteine 107 and cysteine 110.

Belongs to the cytidine and deoxycytidylate deaminase family. ADAT2 subfamily. Zn(2+) is required as a cofactor.

The catalysed reaction is adenosine(34) in tRNA + H2O + H(+) = inosine(34) in tRNA + NH4(+). In terms of biological role, probably participates in deamination of adenosine-34 to inosine in many tRNAs. The chain is tRNA-specific adenosine deaminase 2 (DEADC1) from Bos taurus (Bovine).